The chain runs to 22 residues: Heliocin (22 aa).

Q1 is modified (pyrrolidone carboxylic acid). Residues 1-22 are disordered; it reads QRFIHPTYRPPPQPRRPVIMRA. O-linked (GalNAc...) threonine glycosylation is present at T7.

As to quaternary structure, monomer. As to expression, hemolymph.

It is found in the secreted. Functionally, has antibacterial activity, preferentially against Gram-negative bacteria. This is Heliocin from Heliothis virescens (Tobacco budworm moth).